The following is a 428-amino-acid chain: Pyruvate kinase (428 aa).

R34 is a binding site for substrate. Positions 36, 38, 68, and 69 each coordinate K(+). Residue 36-39 (NFSH) participates in ATP binding. Positions 75 and 152 each coordinate ATP. E214 lines the Mg(2+) pocket. Substrate-binding residues include G237, D238, and T270. D238 serves as a coordination point for Mg(2+).

Belongs to the pyruvate kinase family. As to quaternary structure, homotetramer. Requires Mg(2+) as cofactor. K(+) serves as cofactor.

The enzyme catalyses pyruvate + ATP = phosphoenolpyruvate + ADP + H(+). Its pathway is carbohydrate degradation; glycolysis; pyruvate from D-glyceraldehyde 3-phosphate: step 5/5. In Encephalitozoon cuniculi (strain GB-M1) (Microsporidian parasite), this protein is Pyruvate kinase (PYK1).